A 179-amino-acid polypeptide reads, in one-letter code: Large ribosomal subunit protein uL5 (179 aa).

This sequence belongs to the universal ribosomal protein uL5 family. As to quaternary structure, part of the 50S ribosomal subunit; part of the 5S rRNA/L5/L18/L25 subcomplex. Contacts the 5S rRNA and the P site tRNA. Forms a bridge to the 30S subunit in the 70S ribosome.

Functionally, this is one of the proteins that bind and probably mediate the attachment of the 5S RNA into the large ribosomal subunit, where it forms part of the central protuberance. In the 70S ribosome it contacts protein S13 of the 30S subunit (bridge B1b), connecting the 2 subunits; this bridge is implicated in subunit movement. Contacts the P site tRNA; the 5S rRNA and some of its associated proteins might help stabilize positioning of ribosome-bound tRNAs. This Microcystis aeruginosa (strain NIES-843 / IAM M-2473) protein is Large ribosomal subunit protein uL5.